An 85-amino-acid chain; its full sequence is MKKILFSMFYSILVGEEPDSVFLKKEGKQNQVKMIWVAPSSCAKDLTISEGTGATFLFNFHSRVSYLFPRPFLRPRNMKWTNSFS.

Belongs to the ycf76 family.

Its subcellular location is the plastid. The protein localises to the chloroplast. This is an uncharacterized protein from Oryza sativa subsp. japonica (Rice).